A 476-amino-acid polypeptide reads, in one-letter code: Inner membrane transporter YcaM (476 aa).

Over 1-9 the chain is Cytoplasmic; that stretch reads MAGNVQEKQ. Residues 10 to 30 traverse the membrane as a helical segment; it reads LRWYNIALMSFITVWGFGNVV. Residues 31–38 are Periplasmic-facing; it reads NNYANQGL. Residues 39–59 traverse the membrane as a helical segment; it reads VVVFSWVFIFALYFTPYALIV. The Cytoplasmic portion of the chain corresponds to 60 to 80; that stretch reads GQLGSTFKDGKGGVSTWIKHT. A helical transmembrane segment spans residues 81–101; it reads MGPGLAYLAAWTYWVVHIPYL. At 102 to 125 the chain is on the periplasmic side; it reads AQKPQAILIALGWAMKGDGSLIKE. The chain crosses the membrane as a helical span at residues 126–146; sequence YSVVALQGLTLVLFIFFMWVA. Topologically, residues 147–154 are cytoplasmic; sequence SRGMKSLK. A helical membrane pass occupies residues 155-175; the sequence is IVGSVAGIAMFVMSLLYVAMA. Topologically, residues 176–195 are periplasmic; the sequence is VTAPAITEVHIATTNITWET. A helical transmembrane segment spans residues 196–216; it reads FIPHIDFTYITTISMLVFAVG. The Cytoplasmic portion of the chain corresponds to 217–240; that stretch reads GAEKISPYVNQTRNPGKEFPKGML. A helical transmembrane segment spans residues 241 to 261; it reads CLAVMVAVCAILGSLAMGMMF. Residues 262–291 lie on the Periplasmic side of the membrane; sequence DSRNIPDDLMTNGQYYAFQKLGEYYNMGNT. The chain crosses the membrane as a helical span at residues 292-312; sequence LMVIYAIANTLGQVAALVFSI. Topologically, residues 313–343 are cytoplasmic; the sequence is DAPLKVLLGDADSKYIPASLCRTNASGTPVN. The helical transmembrane segment at 344–364 threads the bilayer; that stretch reads GYFLTLVLVAILIMLPTLGIG. Residues 365-375 lie on the Periplasmic side of the membrane; that stretch reads DMNNLYKWLLN. The chain crosses the membrane as a helical span at residues 376–396; the sequence is LNSVVMPLRYLWVFVAFIAVV. The Cytoplasmic portion of the chain corresponds to 397–414; it reads RLAQKYKPEYVFIRNKPL. Residues 415 to 435 traverse the membrane as a helical segment; sequence AMTVGIWCFAFTAFACLTGIF. At 436 to 448 the chain is on the periplasmic side; sequence PKMEAFTAEWTFQ. A helical membrane pass occupies residues 449–469; the sequence is LALNVATPFVLVGLGLIFPLL. The Cytoplasmic segment spans residues 470–476; the sequence is ARKANSK.

This sequence belongs to the amino acid-polyamine-organocation (APC) superfamily.

It is found in the cell inner membrane. The chain is Inner membrane transporter YcaM (ycaM) from Escherichia coli (strain K12).